A 776-amino-acid polypeptide reads, in one-letter code: Mitochondrial intermediate peptidase (776 aa).

The N-terminal 38 residues, 1–38 (MLNSARTVLARHSARQLYRFRGCLVHQQRHRHQVQRTL), are a transit peptide targeting the mitochondrion. H560 is a Zn(2+) binding site. Residue E561 is part of the active site. Zn(2+) contacts are provided by H564 and H567.

This sequence belongs to the peptidase M3 family. Zn(2+) serves as cofactor.

It localises to the mitochondrion matrix. It carries out the reaction Release of an N-terminal octapeptide as second stage of processing of some proteins imported into the mitochondrion.. Its function is as follows. Cleaves proteins, imported into the mitochondrion, to their mature size. While most mitochondrial precursor proteins are processed to the mature form in one step by mitochondrial processing peptidase (MPP), the sequential cleavage by MIP of an octapeptide after initial processing by MPP is a required step for a subgroup of nuclear-encoded precursor proteins destined for the matrix or the inner membrane. The protein is Mitochondrial intermediate peptidase (OCT1) of Coprinopsis cinerea (strain Okayama-7 / 130 / ATCC MYA-4618 / FGSC 9003) (Inky cap fungus).